Consider the following 130-residue polypeptide: Small ribosomal subunit protein uS9 (130 aa).

It belongs to the universal ribosomal protein uS9 family.

The sequence is that of Small ribosomal subunit protein uS9 from Photorhabdus laumondii subsp. laumondii (strain DSM 15139 / CIP 105565 / TT01) (Photorhabdus luminescens subsp. laumondii).